The following is a 224-amino-acid chain: Endoplasmic reticulum vesicle protein 25 (224 aa).

An N-terminal signal peptide occupies residues Met1 to Ala25. The Lumenal segment spans residues Ile26–Arg190. Residues Thr38–Val131 form the GOLD domain. Residues Val191–Phe211 traverse the membrane as a helical segment. The Cytoplasmic segment spans residues His212–Asp224.

Belongs to the EMP24/GP25L family.

The protein localises to the endoplasmic reticulum membrane. The protein resides in the golgi apparatus membrane. Functionally, constituent of COPII-coated endoplasmic reticulum-derived transport vesicles. Required for efficient transport of a subset of secretory proteins to the Golgi. Facilitates retrograde transport from the Golgi to the endoplasmic reticulum. This chain is Endoplasmic reticulum vesicle protein 25 (ERV25), found in Mycosarcoma maydis (Corn smut fungus).